The sequence spans 691 residues: Elongation factor G 1 (691 aa).

The tr-type G domain occupies 8–282 (ERVRNIGIAA…AVVDYLPAPQ (275 aa)). Residues 17-24 (AHIDAGKT), 81-85 (DTPGH), and 135-138 (NKMD) each bind GTP.

The protein belongs to the TRAFAC class translation factor GTPase superfamily. Classic translation factor GTPase family. EF-G/EF-2 subfamily.

It is found in the cytoplasm. Functionally, catalyzes the GTP-dependent ribosomal translocation step during translation elongation. During this step, the ribosome changes from the pre-translocational (PRE) to the post-translocational (POST) state as the newly formed A-site-bound peptidyl-tRNA and P-site-bound deacylated tRNA move to the P and E sites, respectively. Catalyzes the coordinated movement of the two tRNA molecules, the mRNA and conformational changes in the ribosome. In Trichodesmium erythraeum (strain IMS101), this protein is Elongation factor G 1.